A 98-amino-acid polypeptide reads, in one-letter code: Large ribosomal subunit protein uL23 (98 aa).

This sequence belongs to the universal ribosomal protein uL23 family. Part of the 50S ribosomal subunit. Contacts protein L29, and trigger factor when it is bound to the ribosome.

Its function is as follows. One of the early assembly proteins it binds 23S rRNA. One of the proteins that surrounds the polypeptide exit tunnel on the outside of the ribosome. Forms the main docking site for trigger factor binding to the ribosome. This is Large ribosomal subunit protein uL23 from Borrelia garinii subsp. bavariensis (strain ATCC BAA-2496 / DSM 23469 / PBi) (Borreliella bavariensis).